We begin with the raw amino-acid sequence, 145 residues long: D-aminoacyl-tRNA deacylase (145 aa).

A Gly-cisPro motif, important for rejection of L-amino acids motif is present at residues 137–138 (GP).

This sequence belongs to the DTD family. In terms of assembly, homodimer.

The protein localises to the cytoplasm. It catalyses the reaction glycyl-tRNA(Ala) + H2O = tRNA(Ala) + glycine + H(+). The catalysed reaction is a D-aminoacyl-tRNA + H2O = a tRNA + a D-alpha-amino acid + H(+). An aminoacyl-tRNA editing enzyme that deacylates mischarged D-aminoacyl-tRNAs. Also deacylates mischarged glycyl-tRNA(Ala), protecting cells against glycine mischarging by AlaRS. Acts via tRNA-based rather than protein-based catalysis; rejects L-amino acids rather than detecting D-amino acids in the active site. By recycling D-aminoacyl-tRNA to D-amino acids and free tRNA molecules, this enzyme counteracts the toxicity associated with the formation of D-aminoacyl-tRNA entities in vivo and helps enforce protein L-homochirality. The chain is D-aminoacyl-tRNA deacylase from Salmonella agona (strain SL483).